A 2065-amino-acid chain; its full sequence is WD repeat-containing protein 81 (2065 aa).

One can recognise a BEACH domain in the interval 325 to 617 (LCRNCQDELK…EPPHFGRVNV (293 aa)). Disordered regions lie at residues 1082–1111 (EEEE…GGSG), 1156–1230 (TTVG…VEDR), 1271–1290 (GEKN…DSEE), and 1595–1642 (ASPG…GGDI). Residues 1101–1111 (KVGGGSGGGSG) show a composition bias toward gly residues. The segment covering 1156-1169 (TTVGTKQQNQSTAN) has biased composition (polar residues). The span at 1213–1228 (DGEDGGELEDEEETVE) shows a compositional bias: acidic residues. A compositionally biased stretch (low complexity) spans 1624–1637 (SRSPFPAPSSTSTP). WD repeat units lie at residues 1767–1806 (GHSG…DGTR), 1813–1853 (TYTE…NIRC), 1906–1945 (LSAG…VLRG), 1948–1986 (GHEG…PLHQ), and 2035–2065 (NFRG…RLLA).

Belongs to the WD repeat WDR81 family. As to expression, widely expressed.

The protein localises to the early endosome membrane. The protein resides in the late endosome membrane. It is found in the lysosome membrane. It localises to the cytoplasmic vesicle. Its subcellular location is the autophagosome membrane. The protein localises to the mitochondrion. The protein resides in the cytoplasm. It is found in the cytosol. In terms of biological role, functions as a negative regulator of the PI3 kinase/PI3K activity associated with endosomal membranes. By modifying the phosphatidylinositol 3-phosphate/PtdInsP3 content of endosomal membranes may regulate endosome fusion, recycling, sorting and early to late endosome transport. May also play a role in aggrephagy, the macroautophagic degradation of ubiquitinated protein aggregates. May also be involved in maintenance of normal mitochondrial structure and organization. The protein is WD repeat-containing protein 81 (wdr81) of Danio rerio (Zebrafish).